The sequence spans 212 residues: MLILTVSPDQYQHQNSYLKQMHRLRAEVFGNRLKWDVAIEDGGERDQYDELSPTYILATFGGQRVVGCARLLAPSGPTMLERTFPQLLATGSLSATTAMIETSRFCVDTTLPTGRAGRQLHLATLTMFAGIIEWSMANGYDEIVTATDLRFERILKRAGWPMTRLGEPVAIGNTVAVAGHLPADRKSFERVCPPGYRSIIADDNGRPLRSAA.

The protein belongs to the autoinducer synthase family.

The enzyme catalyses a fatty acyl-[ACP] + S-adenosyl-L-methionine = an N-acyl-L-homoserine lactone + S-methyl-5'-thioadenosine + holo-[ACP] + H(+). Functionally, required for the synthesis of OHHL (N-(3-oxohexanoyl)-L-homoserine lactone), an autoinducer molecule which binds to TraR and thus acts in the control of conjugal transfer. The polypeptide is Acyl-homoserine-lactone synthase (traI) (Rhizobium radiobacter (Agrobacterium tumefaciens)).